The chain runs to 499 residues: Lysine--tRNA ligase (499 aa).

The Mg(2+) site is built by Glu407 and Glu414.

The protein belongs to the class-II aminoacyl-tRNA synthetase family. Homodimer. Mg(2+) is required as a cofactor.

Its subcellular location is the cytoplasm. The catalysed reaction is tRNA(Lys) + L-lysine + ATP = L-lysyl-tRNA(Lys) + AMP + diphosphate. The protein is Lysine--tRNA ligase of Lactiplantibacillus plantarum (strain ATCC BAA-793 / NCIMB 8826 / WCFS1) (Lactobacillus plantarum).